A 260-amino-acid polypeptide reads, in one-letter code: Eukaryotic translation initiation factor 3 subunit G-2 (260 aa).

One can recognise an RRM domain in the interval 180-258; the sequence is CAVRISNLSE…LILSVEWSKP (79 aa).

Belongs to the eIF-3 subunit G family. As to quaternary structure, component of the eukaryotic translation initiation factor 3 (eIF-3) complex. The eIF-3 complex interacts with pix.

Its subcellular location is the cytoplasm. Functionally, RNA-binding component of the eukaryotic translation initiation factor 3 (eIF-3) complex, which is involved in protein synthesis of a specialized repertoire of mRNAs and, together with other initiation factors, stimulates binding of mRNA and methionyl-tRNAi to the 40S ribosome. The eIF-3 complex specifically targets and initiates translation of a subset of mRNAs involved in cell proliferation. This subunit can bind 18S rRNA. In Drosophila grimshawi (Hawaiian fruit fly), this protein is Eukaryotic translation initiation factor 3 subunit G-2.